The following is a 1342-amino-acid chain: DNA-directed RNA polymerase subunit beta (1342 aa).

The protein belongs to the RNA polymerase beta chain family. In terms of assembly, the RNAP catalytic core consists of 2 alpha, 1 beta, 1 beta' and 1 omega subunit. When a sigma factor is associated with the core the holoenzyme is formed, which can initiate transcription.

The catalysed reaction is RNA(n) + a ribonucleoside 5'-triphosphate = RNA(n+1) + diphosphate. Its function is as follows. DNA-dependent RNA polymerase catalyzes the transcription of DNA into RNA using the four ribonucleoside triphosphates as substrates. This chain is DNA-directed RNA polymerase subunit beta, found in Erwinia tasmaniensis (strain DSM 17950 / CFBP 7177 / CIP 109463 / NCPPB 4357 / Et1/99).